Reading from the N-terminus, the 247-residue chain is MAETKNWYNTREAIEKTSPSRLDGINLKEETFQRWSYTSFLQELGQRLNNPQKTIATAIVLCQRFFTRQSLTKNDPKTVAIICMFIAGKVEGSPRPAGDVVFVSYRVLFNKEPLRDVFERLKMTVLTGEKLVLSTLECDLEIEHPYKLVMDWVKRSVKTEDGRRLCQAAFNFVNDSLRTSLCLQFGPSQIASAAIYIGLSMCKMTLPCDGDKAWWREFDVTKRQLWEICDQMLDLYVQDFVVPRHGL.

It belongs to the cyclin family. Cyclin T subfamily.

The protein is Putative cyclin-T1-1 (CYCT1-1) of Arabidopsis thaliana (Mouse-ear cress).